We begin with the raw amino-acid sequence, 229 residues long: MVEHSPHRPIRSFVLRQGRLSNAQRRAHETLMPKYGIPYSGKLLDLAIIFSRSAPKFLEIGFGMGETTALIAQAHPQNDYLAAEVHTPGMGSLLKQVEELELTNIRVIQHDAVDVLQHALPPECLDGVHVFFPDPWPKARHHKRRLIQAEFVDLLCSRLKPGGYIHVATDWEDYAEQILEVLSGEPHLSNTAVGYAPRPEYRPLTKFEQRGLRLGHEVWDVIFRKKQGA.

Glu59, Glu84, Asp111, and Asp134 together coordinate S-adenosyl-L-methionine. Residue Asp134 is part of the active site. Substrate contacts are provided by residues Lys138, Asp170, and 205-208; that span reads TKFE.

It belongs to the class I-like SAM-binding methyltransferase superfamily. TrmB family.

It catalyses the reaction guanosine(46) in tRNA + S-adenosyl-L-methionine = N(7)-methylguanosine(46) in tRNA + S-adenosyl-L-homocysteine. It functions in the pathway tRNA modification; N(7)-methylguanine-tRNA biosynthesis. Its function is as follows. Catalyzes the formation of N(7)-methylguanine at position 46 (m7G46) in tRNA. In Nitrosospira multiformis (strain ATCC 25196 / NCIMB 11849 / C 71), this protein is tRNA (guanine-N(7)-)-methyltransferase.